A 387-amino-acid chain; its full sequence is Leucine aminopeptidase 1 (387 aa).

The signal sequence occupies residues M1–A18. Positions R19–K86 are excised as a propeptide. A glycan (N-linked (GlcNAc...) asparagine) is linked at N179. Residues H187, D206, E245, and D272 each contribute to the Zn(2+) site. An intrachain disulfide couples C321 to C325. Zn(2+) is bound at residue H354.

This sequence belongs to the peptidase M28 family. M28E subfamily. In terms of assembly, monomer. Zn(2+) serves as cofactor.

Its subcellular location is the secreted. Its function is as follows. Extracellular aminopeptidase that allows assimilation of proteinaceous substrates. The polypeptide is Leucine aminopeptidase 1 (lap1) (Sclerotinia sclerotiorum (strain ATCC 18683 / 1980 / Ss-1) (White mold)).